A 67-amino-acid polypeptide reads, in one-letter code: MAVPKRKMSRANTRMRRSQWKAQAPKLVKTVENGKVSYSLPHQAKLVSDSAGTPLFYEYKGRKVADA.

Positions 1-19 (MAVPKRKMSRANTRMRRSQ) are enriched in basic residues. The segment at 1–22 (MAVPKRKMSRANTRMRRSQWKA) is disordered.

The protein belongs to the bacterial ribosomal protein bL32 family.

This is Large ribosomal subunit protein bL32 from Kocuria rhizophila (strain ATCC 9341 / DSM 348 / NBRC 103217 / DC2201).